The chain runs to 209 residues: Protein-L-isoaspartate O-methyltransferase (209 aa).

Ser59 is a catalytic residue.

Belongs to the methyltransferase superfamily. L-isoaspartyl/D-aspartyl protein methyltransferase family.

The protein resides in the cytoplasm. The enzyme catalyses [protein]-L-isoaspartate + S-adenosyl-L-methionine = [protein]-L-isoaspartate alpha-methyl ester + S-adenosyl-L-homocysteine. In terms of biological role, catalyzes the methyl esterification of L-isoaspartyl residues in peptides and proteins that result from spontaneous decomposition of normal L-aspartyl and L-asparaginyl residues. It plays a role in the repair and/or degradation of damaged proteins. This chain is Protein-L-isoaspartate O-methyltransferase, found in Helicobacter pylori (strain P12).